A 156-amino-acid chain; its full sequence is Small ribosomal subunit protein uS7 (156 aa).

The protein belongs to the universal ribosomal protein uS7 family. In terms of assembly, part of the 30S ribosomal subunit. Contacts proteins S9 and S11.

Functionally, one of the primary rRNA binding proteins, it binds directly to 16S rRNA where it nucleates assembly of the head domain of the 30S subunit. Is located at the subunit interface close to the decoding center, probably blocks exit of the E-site tRNA. The chain is Small ribosomal subunit protein uS7 from Thiomonas delicata (Thiomonas cuprina).